We begin with the raw amino-acid sequence, 145 residues long: Putative pre-16S rRNA nuclease (145 aa).

This sequence belongs to the YqgF nuclease family.

The protein resides in the cytoplasm. Could be a nuclease involved in processing of the 5'-end of pre-16S rRNA. The protein is Putative pre-16S rRNA nuclease of Pseudomonas fluorescens (strain Pf0-1).